A 246-amino-acid polypeptide reads, in one-letter code: Pyridoxine 5'-phosphate synthase (246 aa).

Position 12 (Asn-12) interacts with 3-amino-2-oxopropyl phosphate. Position 14 to 15 (14 to 15 (DH)) interacts with 1-deoxy-D-xylulose 5-phosphate. Residue Arg-23 coordinates 3-amino-2-oxopropyl phosphate. The active-site Proton acceptor is His-48. The 1-deoxy-D-xylulose 5-phosphate site is built by Arg-50 and His-55. Glu-75 serves as the catalytic Proton acceptor. Thr-105 lines the 1-deoxy-D-xylulose 5-phosphate pocket. Residue His-196 is the Proton donor of the active site. 3-amino-2-oxopropyl phosphate is bound by residues Gly-197 and 218–219 (GH).

The protein belongs to the PNP synthase family. Homooctamer; tetramer of dimers.

Its subcellular location is the cytoplasm. The enzyme catalyses 3-amino-2-oxopropyl phosphate + 1-deoxy-D-xylulose 5-phosphate = pyridoxine 5'-phosphate + phosphate + 2 H2O + H(+). It participates in cofactor biosynthesis; pyridoxine 5'-phosphate biosynthesis; pyridoxine 5'-phosphate from D-erythrose 4-phosphate: step 5/5. Its function is as follows. Catalyzes the complicated ring closure reaction between the two acyclic compounds 1-deoxy-D-xylulose-5-phosphate (DXP) and 3-amino-2-oxopropyl phosphate (1-amino-acetone-3-phosphate or AAP) to form pyridoxine 5'-phosphate (PNP) and inorganic phosphate. The chain is Pyridoxine 5'-phosphate synthase from Pseudomonas putida (strain GB-1).